A 346-amino-acid chain; its full sequence is GTPase Obg (346 aa).

Residues Met1–Leu159 enclose the Obg domain. Residues Leu128–Glu148 form a disordered region. A compositionally biased stretch (polar residues) spans Phe130 to Gly144. Residues Ala160 to Glu335 form the OBG-type G domain. GTP is bound by residues Gly166–Ser173, Phe191–Tyr195, Asp213–Gly216, Asn285–Asp288, and Ser316–Leu318. Mg(2+)-binding residues include Ser173 and Thr193.

This sequence belongs to the TRAFAC class OBG-HflX-like GTPase superfamily. OBG GTPase family. Monomer. Mg(2+) serves as cofactor.

It is found in the cytoplasm. An essential GTPase which binds GTP, GDP and possibly (p)ppGpp with moderate affinity, with high nucleotide exchange rates and a fairly low GTP hydrolysis rate. Plays a role in control of the cell cycle, stress response, ribosome biogenesis and in those bacteria that undergo differentiation, in morphogenesis control. The chain is GTPase Obg from Halorhodospira halophila (strain DSM 244 / SL1) (Ectothiorhodospira halophila (strain DSM 244 / SL1)).